The chain runs to 501 residues: MNPERQETISPKNVPFQPVPTPNQQSLQSRMLESNQAVPDAFQKVAAWNHYNAVATPPIGVPQTARPPSNQSPHPNPPGYPYQSHQQQFHPLAIAFQQPFGLPQQVIYPPPPPGFTPHRVQVSPVGLLGPPGFFPQFAGSTTSQGNPSEVSVRTKSAEGTTGPIAPSITTKPTSTIQVAPPRDPVAPTTSSSGITKKPENGEFSLVKTISGHTKSVSVIKFSYCGKYLGTGSADKQIKVWNTVDMTYLQTLASHQLGINDFSWSSNSQFIASASDDTTVKIFDVISGACLRTMRGHTNYVFCCSFNPQSSLIASAGFDETVRVWDFKTGLCVKCIPAHSDPITSISYNHDGNTMATSSYDGCIRVWDAASGSCLKTLVDTDHAPVTFVCFSPNGKYLLSAQLDSSLKLWDPKKAKPLKYYNGHKNKKYCLFANMSVPLGKHIISGSEDGRILVWSIQTKQIVQILEGHTTPVLATDSHPTLNIIASGGLEPDNVIRIWRRN.

Disordered stretches follow at residues 1-35 (MNPE…LESN), 58-85 (PIGV…YQSH), and 155-197 (KSAE…ITKK). Residues 22–35 (PNQQSLQSRMLESN) are compositionally biased toward polar residues. Polar residues predominate over residues 167–177 (SITTKPTSTIQ). 7 WD repeats span residues 211–241 (GHTK…KVWN), 253–283 (SHQL…KIFD), 295–325 (GHTN…RVWD), 337–367 (AHSD…RVWD), 381–410 (DHAP…KLWD), 422–455 (GHKN…LVWS), and 467–499 (GHTT…RIWR).

Belongs to the WD repeat WDR5/wds family.

In terms of biological role, not required for methylation of histone H3 'Lys-4'. This is WD repeat-containing protein wdr-5.3 (wdr-5.3) from Caenorhabditis elegans.